A 406-amino-acid polypeptide reads, in one-letter code: MVLIIDGQTSGLAGNMFIGAFIDLGANKDDIINVIKTYANEFGDIDITITKQPKSGIMCTYAQINTTDKSTRHYNEIIEKLDDITQKHYPDNEIILKTINLSKKIFKTLAIAESKVHGKSLDQLHFHEVGCADAVADIIGSSYAYYLLNLDKEKVYSLPVATGSGTVKTQHGILPVPAPAVLNILKNVPTIGGCVNTEICTPTGCAILVNITDEYVSSYPYVTRKTIGYGAGKKDLEVLNALRLVHANSVTKNDTVTILETNIDTLSGEVLGSLYDKLLSEGARDVTITPTIMKKNRPGQIIKVICRNNDAQHITNVLMEETGTLGVRVIPTVHRGVAIRENIHEKININGTWEDVRFKIGYINDKIIKCTPEYDDIKKIANKTSIPIKDLIKYVEMEYRINNRGD.

It belongs to the LarC family.

This chain is Putative nickel insertion protein, found in Methanosphaera stadtmanae (strain ATCC 43021 / DSM 3091 / JCM 11832 / MCB-3).